Here is a 213-residue protein sequence, read N- to C-terminus: Ras-related protein Rab-2 (213 aa).

GTP-binding residues include Thr-15, Gly-16, Gly-18, Lys-19, Ser-20, Cys-21, Gln-32, Pro-33, His-35, Thr-38, Gly-64, Asn-119, Asp-122, and Ala-150. Ser-20 lines the Mg(2+) pocket. Thr-38 serves as a coordination point for Mg(2+). Positions 190–213 (QHSPTNPSLPGAGGAAGAANSGCC) are disordered. Residues Cys-212 and Cys-213 are each lipidated (S-geranylgeranyl cysteine).

Belongs to the small GTPase superfamily. Rab family. In terms of assembly, interacts (GTP-bound form) with Vps16A and Vps39; the interaction with Vps39 is probably direct.

It localises to the vesicle. The protein localises to the cytoplasmic vesicle. Its subcellular location is the cell projection. It is found in the axon. The protein resides in the presynapse. It localises to the presynaptic active zone. The protein localises to the golgi apparatus. Its subcellular location is the trans-Golgi network. It is found in the perikaryon. The protein resides in the autophagosome membrane. It localises to the autolysosome membrane. The catalysed reaction is GTP + H2O = GDP + phosphate + H(+). May be involved in bidirectional endoplasmic reticulum (ER) to Golgi trafficking. Together with Rab7 involved in promoting fusion of autophagosomes and endosomes with lysosomes, probably through recruitment of the HOPS tethering complex. Involved in biosynthetic transport to lysosomes. In larval motor neurons, mediates the biogenesis of presynaptic cargo vesicles and their long-range axonal trafficking to synaptic termini. Not involved in axonal trafficking of mitochondria. During vesicle biogenesis, active zone proteins (including brp/Bruchpilot) and synaptic vesicle proteins (including VGlut) are sorted from the trans-Golgi in a Rab2-dependent manner via, at least, two independent routes. Acts upstream of Arl8 during presynaptic precursor vesicle biogenesis. Associated with lysosomal marker positive presynaptic cargo vesicles during anterograde and retrograde axonal trafficking, probably while in its GTP-bound active state. Involved in the delivery of presynaptic cargos, but not presynapse assembly or active zone function at synaptic termini. Required for autophagocytosis-dependent remodeling of myofibrils and transverse-tubules (T-tubules) during metamorphosis. This is Ras-related protein Rab-2 from Drosophila melanogaster (Fruit fly).